Reading from the N-terminus, the 450-residue chain is UDP-N-acetylmuramoylalanine--D-glutamate ligase (450 aa).

Glycine 116–threonine 122 lines the ATP pocket.

This sequence belongs to the MurCDEF family.

It localises to the cytoplasm. The enzyme catalyses UDP-N-acetyl-alpha-D-muramoyl-L-alanine + D-glutamate + ATP = UDP-N-acetyl-alpha-D-muramoyl-L-alanyl-D-glutamate + ADP + phosphate + H(+). It participates in cell wall biogenesis; peptidoglycan biosynthesis. Functionally, cell wall formation. Catalyzes the addition of glutamate to the nucleotide precursor UDP-N-acetylmuramoyl-L-alanine (UMA). This chain is UDP-N-acetylmuramoylalanine--D-glutamate ligase, found in Dechloromonas aromatica (strain RCB).